We begin with the raw amino-acid sequence, 600 residues long: Proline--tRNA ligase (600 aa).

This sequence belongs to the class-II aminoacyl-tRNA synthetase family. ProS type 1 subfamily. Homodimer.

It is found in the cytoplasm. The enzyme catalyses tRNA(Pro) + L-proline + ATP = L-prolyl-tRNA(Pro) + AMP + diphosphate. Catalyzes the attachment of proline to tRNA(Pro) in a two-step reaction: proline is first activated by ATP to form Pro-AMP and then transferred to the acceptor end of tRNA(Pro). As ProRS can inadvertently accommodate and process non-cognate amino acids such as alanine and cysteine, to avoid such errors it has two additional distinct editing activities against alanine. One activity is designated as 'pretransfer' editing and involves the tRNA(Pro)-independent hydrolysis of activated Ala-AMP. The other activity is designated 'posttransfer' editing and involves deacylation of mischarged Ala-tRNA(Pro). The misacylated Cys-tRNA(Pro) is not edited by ProRS. The protein is Proline--tRNA ligase of Prochlorococcus marinus (strain MIT 9301).